Here is a 102-residue protein sequence, read N- to C-terminus: RNA-binding protein Hfq (102 aa).

Positions 9–68 constitute a Sm domain; sequence DPFLNALRRERVPVSIYLVNGIKLQGQIESFDQFVILLKNTVSQMVYKHAISTVVPSRPV. The disordered stretch occupies residues 63–102; sequence VPSRPVSHHSNNAGGGTSSNYHHGSSAQGTSAQQDSEETE. Residues 70–96 show a composition bias toward polar residues; sequence HHSNNAGGGTSSNYHHGSSAQGTSAQQ.

This sequence belongs to the Hfq family. As to quaternary structure, homohexamer.

In terms of biological role, RNA chaperone that binds small regulatory RNA (sRNAs) and mRNAs to facilitate mRNA translational regulation in response to envelope stress, environmental stress and changes in metabolite concentrations. Also binds with high specificity to tRNAs. The chain is RNA-binding protein Hfq from Citrobacter koseri (strain ATCC BAA-895 / CDC 4225-83 / SGSC4696).